Reading from the N-terminus, the 133-residue chain is MEKTLGLHILADLYGVEFDKIDHVEDVRELLEGAVKYAGLSKLSSHFHQFYPHGATGVILLEESHISIHTWPEHGYAAIDVYTCGGKEKTFKAMEYILKVLKPKRIDEKVAERGTVPVHKEATHIEKIELETV.

Ser-64 acts as the Schiff-base intermediate with substrate; via pyruvic acid in catalysis. At Ser-64 the chain carries Pyruvic acid (Ser); by autocatalysis. Catalysis depends on His-69, which acts as the Proton acceptor; for processing activity. Cys-84 serves as the catalytic Proton donor; for catalytic activity.

Belongs to the prokaryotic AdoMetDC family. Type 1 subfamily. As to quaternary structure, heterotetramer of two alpha and two beta chains arranged as a dimer of alpha/beta heterodimers. Requires pyruvate as cofactor. In terms of processing, is synthesized initially as an inactive proenzyme. Formation of the active enzyme involves a self-maturation process in which the active site pyruvoyl group is generated from an internal serine residue via an autocatalytic post-translational modification. Two non-identical subunits are generated from the proenzyme in this reaction, and the pyruvate is formed at the N-terminus of the alpha chain, which is derived from the carboxyl end of the proenzyme. The post-translation cleavage follows an unusual pathway, termed non-hydrolytic serinolysis, in which the side chain hydroxyl group of the serine supplies its oxygen atom to form the C-terminus of the beta chain, while the remainder of the serine residue undergoes an oxidative deamination to produce ammonia and the pyruvoyl group blocking the N-terminus of the alpha chain.

The catalysed reaction is S-adenosyl-L-methionine + H(+) = S-adenosyl 3-(methylsulfanyl)propylamine + CO2. Its pathway is amine and polyamine biosynthesis; S-adenosylmethioninamine biosynthesis; S-adenosylmethioninamine from S-adenosyl-L-methionine: step 1/1. Catalyzes the decarboxylation of S-adenosylmethionine to S-adenosylmethioninamine (dcAdoMet), the propylamine donor required for the synthesis of the polyamines spermine and spermidine from the diamine putrescine. The chain is S-adenosylmethionine decarboxylase proenzyme from Persephonella marina (strain DSM 14350 / EX-H1).